The primary structure comprises 371 residues: Vasopressin V2 receptor (371 aa).

The disordered stretch occupies residues 1 to 30 (MLMASTTSAVPGHPSLPSLPSNSSQERPLD). The Extracellular portion of the chain corresponds to 1-38 (MLMASTTSAVPGHPSLPSLPSNSSQERPLDTRDPLLAR). Residues 15–24 (SLPSLPSNSS) are compositionally biased toward low complexity. The N-linked (GlcNAc...) asparagine glycan is linked to asparagine 22. A helical membrane pass occupies residues 39 to 63 (AELALLSIVFVAVALSNGLVLAALA). Residues 64-77 (RRGRRGHWAPIHVF) are Cytoplasmic-facing. Residues 78-98 (IGHLCLADLAVALFQVLPQLA) traverse the membrane as a helical segment. Topologically, residues 99–113 (WKATDRFRGPDALCR) are extracellular. A helical membrane pass occupies residues 114-135 (AVKYLQMVGMYASSYMILAMTL). Residues 136–159 (DRHRAICRPMLAYRHGSGAHWNRP) lie on the Cytoplasmic side of the membrane. The chain crosses the membrane as a helical span at residues 160–180 (VLVAWAFSLLLSLPQLFIFAQ). The Extracellular portion of the chain corresponds to 181–200 (RNVEGGSGVTDCWACFAEPW). A helical membrane pass occupies residues 201-220 (GRRTYVTWIALMVFVAPTLG). At 221–271 (IAACQVLIFREIHASLVPGPSERPGGRRRGRRTGSPGEGAHVSAAVAKTVR) the chain is on the cytoplasmic side. Positions 240–259 (PSERPGGRRRGRRTGSPGEG) are disordered. The helical transmembrane segment at 272–293 (MTLVIVVVYVLCWAPFFLVQLW) threads the bilayer. Topologically, residues 294 to 308 (AAWDPEAPLEGAPFV) are extracellular. Residues 309–328 (LLMLLASLNSCTNPWIYASF) form a helical membrane-spanning segment. Over 329-371 (SSSVSSELRSLLCCARGRTPPSLGPQDESCTTASSSLAKDTSS) the chain is Cytoplasmic. S-palmitoyl cysteine attachment occurs at residues cysteine 341 and cysteine 342. The disordered stretch occupies residues 349-371 (PSLGPQDESCTTASSSLAKDTSS). Over residues 356 to 371 (ESCTTASSSLAKDTSS) the composition is skewed to polar residues.

Belongs to the G-protein coupled receptor 1 family. Vasopressin/oxytocin receptor subfamily. Interacts with ARRDC4. Identified in a complex containing at least ARRDC4, V2R and HGS. Interacts with TMEM147. Kidney.

The protein resides in the cell membrane. In terms of biological role, receptor for arginine vasopressin. The activity of this receptor is mediated by G proteins which activate adenylate cyclase. Involved in renal water reabsorption. This is Vasopressin V2 receptor (AVPR2) from Homo sapiens (Human).